Here is a 546-residue protein sequence, read N- to C-terminus: (+)-epi-alpha-bisabolol synthase (546 aa).

Mg(2+) is bound by residues Asp-297, Asp-301, Asp-441, Thr-445, and Glu-449. A DDXXD motif motif is present at residues Asp-297–Asp-301.

Belongs to the terpene synthase family. Mg(2+) serves as cofactor.

It catalyses the reaction (2E,6E)-farnesyl diphosphate + H2O = (+)-epi-alpha-bisabolol + diphosphate. It functions in the pathway secondary metabolite biosynthesis; terpenoid biosynthesis. Functionally, sesquiterpene synthase involved in the biosynthesis of (+)-epi-alpha-bisabolol, a precursor of the natural sweetner hernandulcin. In Phyla dulcis (Aztec sweet herb), this protein is (+)-epi-alpha-bisabolol synthase.